The sequence spans 251 residues: tRNA1(Val) (adenine(37)-N6)-methyltransferase (251 aa).

This sequence belongs to the methyltransferase superfamily. tRNA (adenine-N(6)-)-methyltransferase family.

It is found in the cytoplasm. The catalysed reaction is adenosine(37) in tRNA1(Val) + S-adenosyl-L-methionine = N(6)-methyladenosine(37) in tRNA1(Val) + S-adenosyl-L-homocysteine + H(+). In terms of biological role, specifically methylates the adenine in position 37 of tRNA(1)(Val) (anticodon cmo5UAC). The polypeptide is tRNA1(Val) (adenine(37)-N6)-methyltransferase (Yersinia enterocolitica serotype O:8 / biotype 1B (strain NCTC 13174 / 8081)).